The following is an 870-amino-acid chain: Rho GTPase-activating protein 7 (870 aa).

A PH domain is found at 18 to 125 (TVFKSGPLFI…WKTALEQALA (108 aa)). Positions 167-367 (LALEDIDGSP…VLLEDYGSIF (201 aa)) constitute a Rho-GAP domain. Disordered regions lie at residues 378 to 432 (STES…SGCT) and 446 to 465 (DSDI…SNIR). Acidic residues predominate over residues 407–417 (NEVEPVTDDDN). Residues 569–693 (GEDELAIQRL…HQLNQQRQTH (125 aa)) are a coiled coil. The interval 736 to 793 (HEENVLGAEWRNSKGAGSFGVGNSRQPSRKQIPESTNTTDSKISEESGKISVDKLSSI) is disordered. Positions 777–787 (KISEESGKISV) are enriched in basic and acidic residues.

In terms of biological role, acts as a GTPase activator for the Rac-type GTPase by converting it to an inactive GDP-bound state. The polypeptide is Rho GTPase-activating protein 7 (ROPGAP7) (Arabidopsis thaliana (Mouse-ear cress)).